The primary structure comprises 520 residues: MSQTIDKINSCYPLFEQDEYQELFRNKRQLEEAHDAQRVQEVFAWTTTAEYEALNFRREALTVDPAKACQPLGAVLCSLGFANTLPYVHGSQGCVAYFRTYFNRHFKEPIACVSDSMTEDAAVFGGNNNMNLGLQNASALYKPEIIAVSTTCMAEVIGDDLQAFIANAKKDGFVDSSIAVPHAHTPSFIGSHVTGWDNMFEGFAKTFTADYQGQPGKLPKLNLVTGFETYLGNFRVLKRMMEQMAVPCSLLSDPSEVLDTPADGHYRMYSGGTTQQEMKEAPDAIDTLLLQPWQLLKSKKVVQEMWNQPATEVAIPLGLAATDELLMTVSQLSGKPIADALTLERGRLVDMMLDSHTWLHGKKFGLYGDPDFVMGLTRFLLELGCEPTVILSHNANKRWQKAMNKMLDASPYGRDSEVFINCDLWHFRSLMFTRQPDFMIGNSYGKFIQRDTLAKGKAFEVPLIRLGFPLFDRHHLHRQTTWGYEGAMNIVTTLVNAVLEKLDSDTSQLGKTDYSFDLVR.

The [8Fe-7S] cluster site is built by Cys69, Cys94, Cys152, and Ser187.

Belongs to the NifD/NifK/NifE/NifN family. As to quaternary structure, tetramer of two alpha and two beta chains. Forms complex with the iron protein (nitrogenase component 2). [8Fe-7S] cluster serves as cofactor.

It carries out the reaction N2 + 8 reduced [2Fe-2S]-[ferredoxin] + 16 ATP + 16 H2O = H2 + 8 oxidized [2Fe-2S]-[ferredoxin] + 2 NH4(+) + 16 ADP + 16 phosphate + 6 H(+). Its function is as follows. This molybdenum-iron protein is part of the nitrogenase complex that catalyzes the key enzymatic reactions in nitrogen fixation. This is Nitrogenase molybdenum-iron protein beta chain (nifK) from Klebsiella pneumoniae.